Reading from the N-terminus, the 142-residue chain is Small ribosomal subunit protein uS12 (142 aa).

The interval 1–22 is disordered; sequence MPTFNQLVRKGRKAAKKKSTAP. Residues 9–19 are compositionally biased toward basic residues; the sequence is RKGRKAAKKKS. A 3-methylthioaspartic acid modification is found at Asp-102.

It belongs to the universal ribosomal protein uS12 family. As to quaternary structure, part of the 30S ribosomal subunit. Contacts proteins S8 and S17. May interact with IF1 in the 30S initiation complex.

Its function is as follows. With S4 and S5 plays an important role in translational accuracy. Functionally, interacts with and stabilizes bases of the 16S rRNA that are involved in tRNA selection in the A site and with the mRNA backbone. Located at the interface of the 30S and 50S subunits, it traverses the body of the 30S subunit contacting proteins on the other side and probably holding the rRNA structure together. The combined cluster of proteins S8, S12 and S17 appears to hold together the shoulder and platform of the 30S subunit. The protein is Small ribosomal subunit protein uS12 of Acetivibrio thermocellus (strain ATCC 27405 / DSM 1237 / JCM 9322 / NBRC 103400 / NCIMB 10682 / NRRL B-4536 / VPI 7372) (Clostridium thermocellum).